The sequence spans 66 residues: Conotoxin TsMEKL-03 (66 aa).

An N-terminal signal peptide occupies residues 1–9 (VILLMSTQA). Residues 10-38 (LIQSGVEKRSNKIKALSKRKTTAESWWEG) constitute a propeptide that is removed on maturation. Intrachain disulfides connect C40-C54, C47-C58, and C53-C63.

The protein belongs to the conotoxin O2 superfamily. Expressed by the venom duct.

It localises to the secreted. The sequence is that of Conotoxin TsMEKL-03 from Conus tessulatus (Tessellate cone).